A 201-amino-acid polypeptide reads, in one-letter code: Ribosome maturation factor RimP (201 aa).

Residues 180–201 (LRRGSAPAQDEEGEDEAPGAPL) form a disordered region. Acidic residues predominate over residues 188–201 (QDEEGEDEAPGAPL).

Belongs to the RimP family.

It is found in the cytoplasm. Required for maturation of 30S ribosomal subunits. This Methylobacterium sp. (strain 4-46) protein is Ribosome maturation factor RimP.